The following is a 430-amino-acid chain: Enolase (430 aa).

Glutamine 165 serves as a coordination point for (2R)-2-phosphoglycerate. Residue glutamate 207 is the Proton donor of the active site. Residues aspartate 244, glutamate 287, and aspartate 314 each coordinate Mg(2+). (2R)-2-phosphoglycerate contacts are provided by lysine 339, arginine 368, serine 369, and lysine 390. Lysine 339 functions as the Proton acceptor in the catalytic mechanism.

This sequence belongs to the enolase family. As to quaternary structure, component of the RNA degradosome, a multiprotein complex involved in RNA processing and mRNA degradation. Requires Mg(2+) as cofactor.

It is found in the cytoplasm. It localises to the secreted. The protein localises to the cell surface. It carries out the reaction (2R)-2-phosphoglycerate = phosphoenolpyruvate + H2O. It functions in the pathway carbohydrate degradation; glycolysis; pyruvate from D-glyceraldehyde 3-phosphate: step 4/5. Functionally, catalyzes the reversible conversion of 2-phosphoglycerate (2-PG) into phosphoenolpyruvate (PEP). It is essential for the degradation of carbohydrates via glycolysis. This chain is Enolase, found in Xanthomonas euvesicatoria pv. vesicatoria (strain 85-10) (Xanthomonas campestris pv. vesicatoria).